A 257-amino-acid chain; its full sequence is uncharacterized protein (257 aa).

A compositionally biased stretch (basic and acidic residues) spans 74–83; it reads LKDDLTRDNS. 2 disordered regions span residues 74–115 and 209–257; these read LKDD…TQKR and PYLN…YDSF. Positions 100–113 are enriched in polar residues; it reads SFQNMNSSMPSSTQ. Over residues 216–236 the composition is skewed to acidic residues; that stretch reads SEDDTDSSIVEVETDYSEEEK.

It belongs to the asfivirus DP238L family.

This is an uncharacterized protein from Ornithodoros (relapsing fever ticks).